Here is a 146-residue protein sequence, read N- to C-terminus: Basic phospholipase A2 paradoxin-like alpha chain (146 aa).

Residues 1 to 27 (MHPAHLLVLLAVCVSLLGASDIPPLPL) form the signal peptide. Intrachain disulfides connect cysteine 38-cysteine 99, cysteine 54-cysteine 145, cysteine 56-cysteine 72, cysteine 71-cysteine 126, cysteine 78-cysteine 119, cysteine 88-cysteine 112, and cysteine 106-cysteine 117. Tyrosine 55, glycine 57, and glycine 59 together coordinate Ca(2+). Histidine 75 is an active-site residue. Aspartate 76 is a binding site for Ca(2+). Aspartate 120 is a catalytic residue.

The protein belongs to the phospholipase A2 family. Group I subfamily. D49 sub-subfamily. As to quaternary structure, heterotrimer of alpha, beta, and gamma chains; non-covalently linked. Requires Ca(2+) as cofactor. Expressed by the venom gland.

The protein localises to the secreted. The catalysed reaction is a 1,2-diacyl-sn-glycero-3-phosphocholine + H2O = a 1-acyl-sn-glycero-3-phosphocholine + a fatty acid + H(+). In terms of biological role, heterotrimer: Snake venom phospholipase A2 (PLA2) heterotrimer that acts as a potent presynaptic neurotoxin by blocking synaptic transmission and synaptic vesicle recycling. May act by binding in a calcium-dependent fashion to neurotonal pentraxin-1 (NPTX1) and neurotonal pentraxin-2 (NPTX2), but not to neuronal pentraxin receptor (NPTXR). Also binds to taipoxin-associated calcium binding protein 49 (RCN2), a protein localized in the lumen of endoplasmic reticulum. Monomer (alpha chain): Snake venom phospholipase A2 (PLA2) alpha chain that possesses the same high enzymatic activity than the heterotrimer. PLA2 catalyzes the calcium-dependent hydrolysis of the 2-acyl groups in 3-sn-phosphoglycerides. This Oxyuranus microlepidotus (Inland taipan) protein is Basic phospholipase A2 paradoxin-like alpha chain.